The following is a 182-amino-acid chain: Large ribosomal subunit protein uL16 (182 aa).

It belongs to the universal ribosomal protein uL16 family. Part of the 50S ribosomal subunit.

The polypeptide is Large ribosomal subunit protein uL16 (Thermococcus kodakarensis (strain ATCC BAA-918 / JCM 12380 / KOD1) (Pyrococcus kodakaraensis (strain KOD1))).